Reading from the N-terminus, the 262-residue chain is Shikimate dehydrogenase (NADP(+)) (262 aa).

Residues 15 to 17 and Thr-62 contribute to the shikimate site; that span reads SRS. The active-site Proton acceptor is the Lys-66. Glu-78 lines the NADP(+) pocket. Shikimate contacts are provided by Asn-87 and Asp-102. NADP(+) contacts are provided by residues 126–130, 150–155, and Met-214; these read GAGGA and NRTLAR. Tyr-216 is a shikimate binding site. Gly-236 contacts NADP(+).

The protein belongs to the shikimate dehydrogenase family. In terms of assembly, homodimer.

The enzyme catalyses shikimate + NADP(+) = 3-dehydroshikimate + NADPH + H(+). It participates in metabolic intermediate biosynthesis; chorismate biosynthesis; chorismate from D-erythrose 4-phosphate and phosphoenolpyruvate: step 4/7. Functionally, involved in the biosynthesis of the chorismate, which leads to the biosynthesis of aromatic amino acids. Catalyzes the reversible NADPH linked reduction of 3-dehydroshikimate (DHSA) to yield shikimate (SA). This is Shikimate dehydrogenase (NADP(+)) from Acinetobacter baumannii (strain SDF).